The primary structure comprises 332 residues: Tryptophan--tRNA ligase (332 aa).

ATP is bound by residues 11 to 13 (TST) and 19 to 20 (GN). A 'HIGH' region motif is present at residues 12 to 20 (STGKLTLGN). Residue D140 coordinates L-tryptophan. ATP is bound by residues 152-154 (GQD), I191, and 200-204 (KMSKS). The 'KMSKS' region signature appears at 200–204 (KMSKS).

The protein belongs to the class-I aminoacyl-tRNA synthetase family. As to quaternary structure, homodimer.

It localises to the cytoplasm. It catalyses the reaction tRNA(Trp) + L-tryptophan + ATP = L-tryptophyl-tRNA(Trp) + AMP + diphosphate + H(+). Functionally, catalyzes the attachment of tryptophan to tRNA(Trp). The sequence is that of Tryptophan--tRNA ligase from Mycoplasmopsis pulmonis (strain UAB CTIP) (Mycoplasma pulmonis).